Reading from the N-terminus, the 295-residue chain is Protoheme IX farnesyltransferase (295 aa).

9 helical membrane passes run 24–44, 45–65, 94–114, 117–137, 144–164, 171–191, 216–236, 240–260, and 272–292; these read IMYL…GSMH, PFLA…AGAI, SALE…AIAV, ISAA…TIWL, NIVI…AAVT, SFIL…ALSL, KYIL…ALFL, LLYL…AVSV, and MFSY…FCSI.

It belongs to the UbiA prenyltransferase family. Protoheme IX farnesyltransferase subfamily.

It localises to the cell membrane. It catalyses the reaction heme b + (2E,6E)-farnesyl diphosphate + H2O = Fe(II)-heme o + diphosphate. Its pathway is porphyrin-containing compound metabolism; heme O biosynthesis; heme O from protoheme: step 1/1. Converts heme B (protoheme IX) to heme O by substitution of the vinyl group on carbon 2 of heme B porphyrin ring with a hydroxyethyl farnesyl side group. This Wolbachia pipientis wMel protein is Protoheme IX farnesyltransferase.